The sequence spans 306 residues: ATP synthase gamma chain (306 aa).

Belongs to the ATPase gamma chain family. F-type ATPases have 2 components, CF(1) - the catalytic core - and CF(0) - the membrane proton channel. CF(1) has five subunits: alpha(3), beta(3), gamma(1), delta(1), epsilon(1). CF(0) has three main subunits: a, b and c.

The protein resides in the cell membrane. Functionally, produces ATP from ADP in the presence of a proton gradient across the membrane. The gamma chain is believed to be important in regulating ATPase activity and the flow of protons through the CF(0) complex. This chain is ATP synthase gamma chain, found in Bifidobacterium animalis subsp. lactis (strain AD011).